A 357-amino-acid polypeptide reads, in one-letter code: Thiamine thiazole synthase 3, chloroplastic (357 aa).

A chloroplast-targeting transit peptide spans 1–51; sequence MSISAAGVATGLGANVELKSNVGSSSSSVAGVRLFTSRKAQLRRCAAPATS. Substrate-binding positions include A103, 123–124, G131, and A196; that span reads EQ. At C225 the chain carries 2,3-didehydroalanine (Cys). Substrate is bound by residues D227, H242, M294, and 304–306; that span reads RMG.

This sequence belongs to the THI4 family. In terms of assembly, homooctamer. It depends on Fe cation as a cofactor. In terms of processing, during the catalytic reaction, a sulfide is transferred from Cys-225 to a reaction intermediate, generating a dehydroalanine residue.

The protein localises to the plastid. Its subcellular location is the chloroplast. The enzyme catalyses [ADP-thiazole synthase]-L-cysteine + glycine + NAD(+) = [ADP-thiazole synthase]-dehydroalanine + ADP-5-ethyl-4-methylthiazole-2-carboxylate + nicotinamide + 3 H2O + 2 H(+). Functionally, involved in biosynthesis of the thiamine precursor thiazole. Catalyzes the conversion of NAD and glycine to adenosine diphosphate 5-(2-hydroxyethyl)-4-methylthiazole-2-carboxylic acid (ADT), an adenylated thiazole intermediate. The reaction includes an iron-dependent sulfide transfer from a conserved cysteine residue of the protein to a thiazole intermediate. The enzyme can only undergo a single turnover, which suggests it is a suicide enzyme. May have additional roles in adaptation to various stress conditions and in DNA damage tolerance. This is Thiamine thiazole synthase 3, chloroplastic from Physcomitrium patens (Spreading-leaved earth moss).